The sequence spans 546 residues: ATP-dependent rRNA helicase RRP3 (546 aa).

Residues 1–108 are disordered; sequence MSDFKRRKLE…DEEAEAQAAA (108 aa). 2 stretches are compositionally biased toward acidic residues: residues 60–77 and 94–103; these read SEEDEDEFGGFSGEEEED and EAEQSDEEAE. Positions 115-143 match the Q motif motif; sequence KTFADLGVREELCDACENLGYKTATPIQT. In terms of domain architecture, Helicase ATP-binding spans 146-318; that stretch reads IPLALAGKDI…RAALKNPVRV (173 aa). Residue 159–166 coordinates ATP; that stretch reads AETGSGKT. The short motif at 265–268 is the DEAD box element; it reads DEAD. Residues 342-490 form the Helicase C-terminal domain; sequence YKDLYLIHLL…EEKVSRDEVM (149 aa). The segment covering 504–515 has biased composition (basic and acidic residues); sequence VREMKDLHDQRK. A disordered region spans residues 504–546; sequence VREMKDLHDQRKSGRGGRGGGRGGGRGGRGRGGRRDNMDMDEG. Positions 519–530 are enriched in gly residues; sequence GGRGGGRGGGRG. Residues 536-546 are compositionally biased toward basic and acidic residues; it reads GRRDNMDMDEG.

Belongs to the DEAD box helicase family. DDX47/RRP3 subfamily. In terms of assembly, interacts with the SSU processome.

Its subcellular location is the nucleus. It carries out the reaction ATP + H2O = ADP + phosphate + H(+). Functionally, ATP-dependent rRNA helicase required for pre-ribosomal RNA processing. Involved in the maturation of the 35S-pre-rRNA and to its cleavage to mature 18S rRNA. The chain is ATP-dependent rRNA helicase RRP3 from Phaeosphaeria nodorum (strain SN15 / ATCC MYA-4574 / FGSC 10173) (Glume blotch fungus).